We begin with the raw amino-acid sequence, 562 residues long: Dihydroxy-acid dehydratase (562 aa).

Aspartate 80 is a binding site for Mg(2+). Position 121 (cysteine 121) interacts with [2Fe-2S] cluster. Mg(2+)-binding residues include aspartate 122 and lysine 123. An N6-carboxylysine modification is found at lysine 123. Position 194 (cysteine 194) interacts with [2Fe-2S] cluster. Position 446 (glutamate 446) interacts with Mg(2+). Serine 472 (proton acceptor) is an active-site residue.

This sequence belongs to the IlvD/Edd family. As to quaternary structure, homodimer. The cofactor is [2Fe-2S] cluster. Requires Mg(2+) as cofactor.

The enzyme catalyses (2R)-2,3-dihydroxy-3-methylbutanoate = 3-methyl-2-oxobutanoate + H2O. It carries out the reaction (2R,3R)-2,3-dihydroxy-3-methylpentanoate = (S)-3-methyl-2-oxopentanoate + H2O. It functions in the pathway amino-acid biosynthesis; L-isoleucine biosynthesis; L-isoleucine from 2-oxobutanoate: step 3/4. Its pathway is amino-acid biosynthesis; L-valine biosynthesis; L-valine from pyruvate: step 3/4. Functions in the biosynthesis of branched-chain amino acids. Catalyzes the dehydration of (2R,3R)-2,3-dihydroxy-3-methylpentanoate (2,3-dihydroxy-3-methylvalerate) into 2-oxo-3-methylpentanoate (2-oxo-3-methylvalerate) and of (2R)-2,3-dihydroxy-3-methylbutanoate (2,3-dihydroxyisovalerate) into 2-oxo-3-methylbutanoate (2-oxoisovalerate), the penultimate precursor to L-isoleucine and L-valine, respectively. In Staphylococcus epidermidis (strain ATCC 35984 / DSM 28319 / BCRC 17069 / CCUG 31568 / BM 3577 / RP62A), this protein is Dihydroxy-acid dehydratase.